We begin with the raw amino-acid sequence, 383 residues long: Alanine racemase (383 aa).

Catalysis depends on K50, which acts as the Proton acceptor; specific for D-alanine. An N6-(pyridoxal phosphate)lysine modification is found at K50. R151 provides a ligand contact to substrate. Catalysis depends on Y279, which acts as the Proton acceptor; specific for L-alanine. Residue M327 coordinates substrate.

It belongs to the alanine racemase family. Pyridoxal 5'-phosphate is required as a cofactor.

The enzyme catalyses L-alanine = D-alanine. The protein operates within amino-acid biosynthesis; D-alanine biosynthesis; D-alanine from L-alanine: step 1/1. Functionally, catalyzes the interconversion of L-alanine and D-alanine. May also act on other amino acids. This chain is Alanine racemase (alr), found in Chlorobaculum tepidum (strain ATCC 49652 / DSM 12025 / NBRC 103806 / TLS) (Chlorobium tepidum).